Consider the following 250-residue polypeptide: DSC E3 ubiquitin ligase complex subunit 3 (250 aa).

The disordered stretch occupies residues 105 to 130 (LASQDQAQSGLNSNSESPDDLQNAQT). Over residues 107-130 (SQDQAQSGLNSNSESPDDLQNAQT) the composition is skewed to polar residues. An N-linked (GlcNAc...) asparagine glycan is attached at Asn-187. 2 helical membrane passes run 199-219 (TLLA…YFLW) and 228-248 (MQLS…LHSY).

The protein belongs to the dsc3 family. As to quaternary structure, component of the DSC E3 ubiquitin ligase complex composed of dsc1, dsc2, dsc3 and dsc4.

It is found in the endoplasmic reticulum membrane. The protein localises to the golgi apparatus membrane. Its pathway is protein modification; protein ubiquitination. Functionally, component of the DSC E3 ubiquitin ligase complex which is required for the sre1 transcriptional activator proteolytic cleavage to release the soluble transcription factor from the membrane in low oxygen or sterol conditions. The complex also plays an important role in the multivesicular body (MVB) pathway and functions in a post-endoplasmic reticulum pathway for protein degradation. The polypeptide is DSC E3 ubiquitin ligase complex subunit 3 (dsc3) (Schizosaccharomyces pombe (strain 972 / ATCC 24843) (Fission yeast)).